The primary structure comprises 547 residues: Kelch repeat and BTB domain-containing protein 2 (547 aa).

Residues 20-89 (CDVIITIGDG…LYNRHISSMN (70 aa)) enclose the BTB domain. Kelch repeat units follow at residues 295–342 (DIII…VIDD), 343–389 (TIYA…VLDQ), and 391–454 (IYII…SHKD).

As to quaternary structure, interacts (via BTB domain) with host CUL3.

It localises to the host cytoplasm. Functionally, probable substrate-specific adapter of CUL3-containing E3 ubiquitin-protein ligases which mediate the ubiquitination and subsequent proteasomal degradation of host target proteins. This is Kelch repeat and BTB domain-containing protein 2 (KBTB2) from Bos taurus (Bovine).